A 212-amino-acid polypeptide reads, in one-letter code: Adenylate kinase (212 aa).

ATP is bound at residue 10–15 (GAGKGT). Residues 30-59 (STGDMFRAAMANQTEMGRLAKSYIDKGELV) form an NMP region. AMP is bound by residues T31, R36, 57 to 59 (ELV), 86 to 89 (GYPR), and Q93. Residues 127–159 (GRIINRKTGETFHKVFNPPVDYKEEDYYQREDD) form an LID region. Residues R128 and 137–138 (TF) each bind ATP. The AMP site is built by R156 and R167. Q195 is an ATP binding site.

Belongs to the adenylate kinase family. As to quaternary structure, monomer.

It is found in the cytoplasm. The catalysed reaction is AMP + ATP = 2 ADP. It functions in the pathway purine metabolism; AMP biosynthesis via salvage pathway; AMP from ADP: step 1/1. Catalyzes the reversible transfer of the terminal phosphate group between ATP and AMP. Plays an important role in cellular energy homeostasis and in adenine nucleotide metabolism. The polypeptide is Adenylate kinase (Streptococcus pyogenes serotype M3 (strain ATCC BAA-595 / MGAS315)).